The sequence spans 132 residues: Ribosome-binding factor A (132 aa).

It belongs to the RbfA family. Monomer. Binds 30S ribosomal subunits, but not 50S ribosomal subunits or 70S ribosomes.

It is found in the cytoplasm. Functionally, one of several proteins that assist in the late maturation steps of the functional core of the 30S ribosomal subunit. Associates with free 30S ribosomal subunits (but not with 30S subunits that are part of 70S ribosomes or polysomes). Required for efficient processing of 16S rRNA. May interact with the 5'-terminal helix region of 16S rRNA. The polypeptide is Ribosome-binding factor A (Pasteurella multocida (strain Pm70)).